Here is a 357-residue protein sequence, read N- to C-terminus: Phenylalanine--tRNA ligase alpha subunit (357 aa).

A Mg(2+)-binding site is contributed by glutamate 257.

It belongs to the class-II aminoacyl-tRNA synthetase family. Phe-tRNA synthetase alpha subunit type 1 subfamily. As to quaternary structure, tetramer of two alpha and two beta subunits. The cofactor is Mg(2+).

It localises to the cytoplasm. It catalyses the reaction tRNA(Phe) + L-phenylalanine + ATP = L-phenylalanyl-tRNA(Phe) + AMP + diphosphate + H(+). The sequence is that of Phenylalanine--tRNA ligase alpha subunit from Roseobacter denitrificans (strain ATCC 33942 / OCh 114) (Erythrobacter sp. (strain OCh 114)).